We begin with the raw amino-acid sequence, 211 residues long: Large ribosomal subunit protein uL3 (211 aa).

This sequence belongs to the universal ribosomal protein uL3 family. Part of the 50S ribosomal subunit. Forms a cluster with proteins L14 and L19.

One of the primary rRNA binding proteins, it binds directly near the 3'-end of the 23S rRNA, where it nucleates assembly of the 50S subunit. The sequence is that of Large ribosomal subunit protein uL3 from Halothermothrix orenii (strain H 168 / OCM 544 / DSM 9562).